The following is a 290-amino-acid chain: 4-hydroxy-3-methylbut-2-enyl diphosphate reductase (290 aa).

Cys-12 lines the [4Fe-4S] cluster pocket. His-50 and His-83 together coordinate (2E)-4-hydroxy-3-methylbut-2-enyl diphosphate. Dimethylallyl diphosphate is bound by residues His-50 and His-83. Isopentenyl diphosphate contacts are provided by His-50 and His-83. Position 105 (Cys-105) interacts with [4Fe-4S] cluster. His-133 serves as a coordination point for (2E)-4-hydroxy-3-methylbut-2-enyl diphosphate. Position 133 (His-133) interacts with dimethylallyl diphosphate. Residue His-133 coordinates isopentenyl diphosphate. The Proton donor role is filled by Glu-135. Thr-173 contacts (2E)-4-hydroxy-3-methylbut-2-enyl diphosphate. A [4Fe-4S] cluster-binding site is contributed by Cys-202. (2E)-4-hydroxy-3-methylbut-2-enyl diphosphate-binding residues include Ser-230, Asn-232, and Ser-274. Dimethylallyl diphosphate-binding residues include Ser-230, Asn-232, and Ser-274. Isopentenyl diphosphate-binding residues include Ser-230, Asn-232, and Ser-274.

Belongs to the IspH family. The cofactor is [4Fe-4S] cluster.

It carries out the reaction isopentenyl diphosphate + 2 oxidized [2Fe-2S]-[ferredoxin] + H2O = (2E)-4-hydroxy-3-methylbut-2-enyl diphosphate + 2 reduced [2Fe-2S]-[ferredoxin] + 2 H(+). It catalyses the reaction dimethylallyl diphosphate + 2 oxidized [2Fe-2S]-[ferredoxin] + H2O = (2E)-4-hydroxy-3-methylbut-2-enyl diphosphate + 2 reduced [2Fe-2S]-[ferredoxin] + 2 H(+). It functions in the pathway isoprenoid biosynthesis; dimethylallyl diphosphate biosynthesis; dimethylallyl diphosphate from (2E)-4-hydroxy-3-methylbutenyl diphosphate: step 1/1. Its pathway is isoprenoid biosynthesis; isopentenyl diphosphate biosynthesis via DXP pathway; isopentenyl diphosphate from 1-deoxy-D-xylulose 5-phosphate: step 6/6. In terms of biological role, catalyzes the conversion of 1-hydroxy-2-methyl-2-(E)-butenyl 4-diphosphate (HMBPP) into a mixture of isopentenyl diphosphate (IPP) and dimethylallyl diphosphate (DMAPP). Acts in the terminal step of the DOXP/MEP pathway for isoprenoid precursor biosynthesis. This is 4-hydroxy-3-methylbut-2-enyl diphosphate reductase from Nitratidesulfovibrio vulgaris (strain DP4) (Desulfovibrio vulgaris).